A 790-amino-acid polypeptide reads, in one-letter code: Ribonucleoside-diphosphate reductase large subunit (790 aa).

Substrate-binding positions include T208, 223–224, G254, 436–440, and 621–625; these read SC, NLCTE, and PTVSS. C224 and C453 form a disulfide bridge. The active-site Proton acceptor is the N436. C438 acts as the Cysteine radical intermediate in catalysis. Residue E440 is the Proton acceptor of the active site.

The protein belongs to the ribonucleoside diphosphate reductase large chain family. Heterotetramer composed of a homodimer of the large subunit (R1) and a homodimer of the small subunit (R2). Larger multisubunit protein complex are also active, composed of (R1)n(R2)n.

The catalysed reaction is a 2'-deoxyribonucleoside 5'-diphosphate + [thioredoxin]-disulfide + H2O = a ribonucleoside 5'-diphosphate + [thioredoxin]-dithiol. Its function is as follows. Ribonucleoside-diphosphate reductase holoenzyme provides the precursors necessary for viral DNA synthesis. Allows virus growth in non-dividing cells, as well as reactivation from latency in infected hosts. Catalyzes the biosynthesis of deoxyribonucleotides from the corresponding ribonucleotides. The polypeptide is Ribonucleoside-diphosphate reductase large subunit (Equus caballus (Horse)).